The chain runs to 197 residues: ATP-dependent Clp protease proteolytic subunit 1 (197 aa).

S99 (nucleophile) is an active-site residue. H124 is a catalytic residue.

It belongs to the peptidase S14 family. As to quaternary structure, fourteen ClpP subunits assemble into 2 heptameric rings which stack back to back to give a disk-like structure with a central cavity, resembling the structure of eukaryotic proteasomes.

The protein resides in the cytoplasm. It carries out the reaction Hydrolysis of proteins to small peptides in the presence of ATP and magnesium. alpha-casein is the usual test substrate. In the absence of ATP, only oligopeptides shorter than five residues are hydrolyzed (such as succinyl-Leu-Tyr-|-NHMec, and Leu-Tyr-Leu-|-Tyr-Trp, in which cleavage of the -Tyr-|-Leu- and -Tyr-|-Trp bonds also occurs).. Cleaves peptides in various proteins in a process that requires ATP hydrolysis. Has a chymotrypsin-like activity. Plays a major role in the degradation of misfolded proteins. The protein is ATP-dependent Clp protease proteolytic subunit 1 of Treponema denticola (strain ATCC 35405 / DSM 14222 / CIP 103919 / JCM 8153 / KCTC 15104).